Consider the following 1956-residue polypeptide: Sodium channel protein type 10 subunit alpha (1956 aa).

Residues 1 to 125 (MELPFASVGT…FNLIRRTAIK (125 aa)) are Cytoplasmic-facing. Residues 31–54 (HRAAKKARTKHRGQEDKGEKPRPQ) are disordered. Over residues 32-41 (RAAKKARTKH) the composition is skewed to basic residues. The segment covering 42–54 (RGQEDKGEKPRPQ) has biased composition (basic and acidic residues). The I repeat unit spans residues 116-404 (FNLIRRTAIK…VTMAYEEQSQ (289 aa)). The helical transmembrane segment at 126 to 149 (VSVHSWFSIFITITILVNCVCMTR) threads the bilayer. Residues 150-154 (TDLPE) are Extracellular-facing. A helical membrane pass occupies residues 155 to 174 (KVEYVFTVIYTFEALIKILA). The Cytoplasmic segment spans residues 175-187 (RGFCLNEFTYLRD). A helical membrane pass occupies residues 188–206 (PWNWLDFSVITLAYVGAAI). The Extracellular portion of the chain corresponds to 207 to 212 (DLRGIS). A helical; Voltage-sensor membrane pass occupies residues 213 to 232 (GLRTFRVLRALKTVSVIPGL). Residues 233–248 (KVIVGALIHSVRKLAD) lie on the Cytoplasmic side of the membrane. Residues 249 to 272 (VTILTVFCLSVFALVGLQLFKGNL) traverse the membrane as a helical segment. The Extracellular segment spans residues 273-340 (KNKCIRNGTD…PDFNYTSFDS (68 aa)). A disulfide bridge connects residues Cys276 and Cys318. 4 N-linked (GlcNAc...) asparagine glycosylation sites follow: Asn279, Asn288, Asn311, and Asn334. An intramembrane region (pore-forming) is located at residues 341–365 (FAWAFLSLFRLMTQDSWERLYQQTL). Residues 366–372 (RASGKMY) lie on the Extracellular side of the membrane. A helical transmembrane segment spans residues 373 to 398 (MVFFVLVIFLGSFYLVNLILAVVTMA). The Cytoplasmic segment spans residues 399–658 (YEEQSQATIA…KWRKFKMALF (260 aa)). Ser440, Ser443, Ser466, and Ser478 each carry phosphoserine. Residues 441–453 (LQSHSGSPLASKN) show a composition bias toward polar residues. Disordered stretches follow at residues 441–484 (LQSH…YNQR) and 537–581 (LLGR…AGAP). A compositionally biased stretch (polar residues) spans 475–484 (SPQSDPYNQR). Phosphoserine is present on residues Ser611 and Ser614. The stretch at 646-910 (CCPKWRKFKM…EDDGEVNNLQ (265 aa)) is one II repeat. The helical transmembrane segment at 659 to 683 (ELVTDPFAELTITLCIVVNTVFMAM) threads the bilayer. The Extracellular segment spans residues 684–694 (EHYPMTDAFDA). Residues 695 to 718 (MLQAGNIVFTVFFTMEMAFKIIAF) form a helical membrane-spanning segment. The Cytoplasmic segment spans residues 719-726 (DPYYYFQK). The helical transmembrane segment at 727–746 (KWNIFDCVIVTVSLLELSAS) threads the bilayer. The Extracellular segment spans residues 747 to 752 (KKGSLS). A helical; Voltage-sensor transmembrane segment spans residues 753–772 (VLRTFRLLRVFKLAKSWPTL). The Cytoplasmic segment spans residues 773–788 (NTLIKIIGNSVGALGN). Residues 789 to 809 (LTFILAIIVFIFALVGKQLLS) form a helical membrane-spanning segment. The Extracellular segment spans residues 810 to 833 (EDYGCRKDGVSVWNGEKLRWHMCD). Residues 834–854 (FFHSFLVVFRILCGEWIENMW) constitute an intramembrane region (pore-forming). The Extracellular portion of the chain corresponds to 855–863 (VCMEVSQKS). Cys856 and Cys865 form a disulfide bridge. Residues 864 to 889 (ICLILFLTVMVLGNLVVLNLFIALLL) traverse the membrane as a helical segment. Residues 890–1148 (NSFSADNLTA…GWQVRKTCYR (259 aa)) lie on the Cytoplasmic side of the membrane. The disordered stretch occupies residues 1008–1094 (DELEEDMEQA…SEGSTVDCPD (87 aa)). Residues 1141–1450 (QVRKTCYRIV…KKYYNAMKKL (310 aa)) form an III repeat. Residues 1149 to 1172 (IVEHSWFESFIIFMILLSSGALAF) form a helical membrane-spanning segment. The Extracellular segment spans residues 1173–1185 (EDNYLEEKPRVKS). A helical membrane pass occupies residues 1186-1211 (VLEYTDRVFTFIFVFEMLLKWVAYGF). Residues 1212 to 1217 (KKYFTN) lie on the Cytoplasmic side of the membrane. The chain crosses the membrane as a helical span at residues 1218-1239 (AWCWLDFLIVNISLTSLIAKIL). Residues 1240–1243 (EYSD) lie on the Extracellular side of the membrane. Residues 1244-1265 (VASIKALRTLRALRPLRALSRF) form a helical; Voltage-sensor membrane-spanning segment. Over 1266-1284 (EGMRVVVDALVGAIPSIMN) the chain is Cytoplasmic. A helical membrane pass occupies residues 1285-1312 (VLLVCLIFWLIFSIMGVNLFAGKFSKCV). Residues 1313-1354 (DTRNNPFSNVNSTMVNNKSECHNQNSTGHFFWVNVKVNFDNV) lie on the Extracellular side of the membrane. Residues Asn1323, Asn1329, and Asn1337 are each glycosylated (N-linked (GlcNAc...) asparagine). The segment at residues 1355-1376 (AMGYLALLQVATFKGWMDIMYA) is an intramembrane region (pore-forming). Residues 1377–1392 (AVDSGEINSQPNWENN) lie on the Extracellular side of the membrane. Residues 1393–1419 (LYMYLYFVVFIIFGGFFTLNLFVGVII) form a helical membrane-spanning segment. Residues 1420 to 1472 (DNFNQQKKKLGGQDIFMTEEQKKYYNAMKKLGSKKPQKPIPRPLNKYQGFVFD) lie on the Cytoplasmic side of the membrane. The residue at position 1452 (Ser1452) is a Phosphoserine; by PKC. An IV repeat occupies 1459 to 1758 (IPRPLNKYQG…WEKFDPEATQ (300 aa)). The helical transmembrane segment at 1473–1496 (IVTRQAFDIIIMVLICLNMITMMV) threads the bilayer. Residues 1497–1507 (ETDEQGEEKTK) lie on the Extracellular side of the membrane. A helical transmembrane segment spans residues 1508–1531 (VLGRINQFFVAVFTGECVMKMFAL). At 1532–1537 (RQYYFT) the chain is on the cytoplasmic side. A helical transmembrane segment spans residues 1538 to 1561 (NGWNVFDFIVVILSIGSLLFSAIL). Residues 1562-1573 (KSLENYFSPTLF) lie on the Extracellular side of the membrane. A helical; Voltage-sensor transmembrane segment spans residues 1574–1595 (RVIRLARIGRILRLIRAAKGIR). The Cytoplasmic portion of the chain corresponds to 1596–1610 (TLLFALMMSLPALFN). The helical transmembrane segment at 1611-1633 (IGLLLFLVMFIYSIFGMASFANV) threads the bilayer. At 1634 to 1647 (VDEAGIDDMFNFKT) the chain is on the extracellular side. An intramembrane region (pore-forming) is located at residues 1648–1670 (FGNSMLCLFQITTSAGWDGLLSP). Topologically, residues 1671–1698 (ILNTGPPYCDPNLPNSNGSRGNCGSPAV) are extracellular. Residue Asn1687 is glycosylated (N-linked (GlcNAc...) asparagine). The helical transmembrane segment at 1699-1723 (GIIFFTTYIIISFLIVVNMYIAVIL) threads the bilayer. Over 1724–1956 (ENFNVATEES…AKEGNSPGPQ (233 aa)) the chain is Cytoplasmic. The IQ domain occupies 1852-1881 (EDLSATVIQKAYRSYMLHRSLTLSNTLHVP). The tract at residues 1906-1956 (DKSETASATSFPPSYDSVTRGLSDRANINPSSSMQNEDEVAAKEGNSPGPQ) is disordered. Polar residues predominate over residues 1931–1940 (ANINPSSSMQ).

Belongs to the sodium channel (TC 1.A.1.10) family. Nav1.8/SCN10A subfamily. The channel consists of an ion conducting pore forming alpha-subunit regulated by one or more associated auxiliary subunits SCN1B, SCN2B and SCN3B; electrophysiological properties may vary depending on the type of the associated beta subunits. Found in a number of complexes with PRX, DYNLT1 and PDZD2. Interacts with proteins such as FSTL1, PRX, DYNLT1, PDZD2, S100A10 and many others. Interacts with NEDD4 and NEDD4L. Post-translationally, ubiquitinated by NEDD4L; which promotes its endocytosis. Phosphorylation at Ser-1452 by PKC in a highly conserved cytoplasmic loop slows inactivation of the sodium channel and reduces peak sodium currents. In terms of processing, lacks the cysteine which covalently binds the conotoxin GVIIJ. This cysteine (position 815) is speculated in other sodium channel subunits alpha to be implied in covalent binding with the sodium channel subunit beta-2 or beta-4. In terms of tissue distribution, expressed in dorsal root ganglia, trigeminal ganglia, nodose ganglia and sciatic nerve.

The protein resides in the cell membrane. The enzyme catalyses Na(+)(in) = Na(+)(out). In terms of biological role, tetrodotoxin-resistant channel that mediates the voltage-dependent sodium ion permeability of excitable membranes. Assuming opened or closed conformations in response to the voltage difference across the membrane, the protein forms a sodium-selective channel through which sodium ions may pass in accordance with their electrochemical gradient. Plays a role in neuropathic pain mechanisms. This is Sodium channel protein type 10 subunit alpha from Rattus norvegicus (Rat).